The following is a 554-amino-acid chain: Terpene synthase 17 (554 aa).

Positions 306, 310, and 458 each coordinate Mg(2+). Residues 306–310 carry the DDXXD motif motif; that stretch reads DDTYD.

This sequence belongs to the terpene synthase family. Tpsa subfamily. The cofactor is Mg(2+). It depends on Mn(2+) as a cofactor.

The enzyme catalyses (2E,6E)-farnesyl diphosphate = (+)-valencene + diphosphate. The catalysed reaction is (2E,6E)-farnesyl diphosphate = (E)-beta-farnesene + diphosphate. It catalyses the reaction (2E,6E)-farnesyl diphosphate = gamma-gurjunene + diphosphate. It carries out the reaction (2Z,6Z)-farnesyl diphosphate = beta-bisabolene + diphosphate. The enzyme catalyses (2Z,6Z)-farnesyl diphosphate = (E)-gamma-bisabolene + diphosphate. The catalysed reaction is (2E)-geranyl diphosphate = limonene + diphosphate. It catalyses the reaction (2E)-geranyl diphosphate = beta-myrcene + diphosphate. It carries out the reaction (2E)-geranyl diphosphate = (E)-beta-ocimene + diphosphate. The enzyme catalyses (2E)-geranyl diphosphate = terpinolene + diphosphate. The catalysed reaction is (2E)-geranyl diphosphate = gamma-terpinene + diphosphate. It catalyses the reaction (2Z,6Z)-farnesyl diphosphate = (Z)-gamma-bisabolene + diphosphate. It carries out the reaction (2E,6E)-farnesyl diphosphate = (1S,5S,6R)-alpha-bergamotene + diphosphate. The enzyme catalyses (2Z,6Z)-farnesyl diphosphate = (1S,5S,6S)-alpha-bergamotene + diphosphate. It functions in the pathway secondary metabolite biosynthesis; terpenoid biosynthesis. In terms of biological role, sesquiterpene synthase involved in the biosynthesis of volatile compounds. Mediates the conversion of (2E,6E)-farnesyl diphosphate (FPP) into gamma-gurjunene, (E)-beta-farnesene and (+)-valencene, and of (2Z,6Z)-farnesyl diphosphate ((ZZ)-FPP) into (E)-alpha-bergamotene and (Z)-gamma-bisabolene as well as beta-bisabolene, (Z)-alpha-bergamotene and (E)-gamma-bisabolene to a lower extent. Can act with a low efficiency as a monoterpene synthase with geranyl diphosphate (GPP) as substrate, thus producing beta-myrcene, (E)-beta-ocimene, limonene, terpinolene, gamma-terpinene and (Z)-beta-ocimene. This Solanum habrochaites (Wild tomato) protein is Terpene synthase 17.